The sequence spans 202 residues: Putative 3-methyladenine DNA glycosylase (202 aa).

It belongs to the DNA glycosylase MPG family.

The protein is Putative 3-methyladenine DNA glycosylase of Staphylococcus aureus (strain MRSA252).